The chain runs to 145 residues: Mannitol-specific phosphotransferase enzyme IIA component (145 aa).

Positions 4-144 constitute a PTS EIIA type-2 domain; it reads PILKKENIVL…EEILSILNEV (141 aa). The active-site Tele-phosphohistidine intermediate is the His64. The residue at position 64 (His64) is a Phosphohistidine; by HPr.

The protein localises to the cytoplasm. In terms of biological role, the phosphoenolpyruvate-dependent sugar phosphotransferase system (sugar PTS), a major carbohydrate active transport system, catalyzes the phosphorylation of incoming sugar substrates concomitantly with their translocation across the cell membrane. The enzyme II CmtAB PTS system is involved in D-mannitol transport. The polypeptide is Mannitol-specific phosphotransferase enzyme IIA component (Geobacillus stearothermophilus (Bacillus stearothermophilus)).